The chain runs to 904 residues: Alanine--tRNA ligase (904 aa).

Zn(2+)-binding residues include His-594, His-598, Cys-695, and His-699.

Belongs to the class-II aminoacyl-tRNA synthetase family. Zn(2+) is required as a cofactor.

Its subcellular location is the cytoplasm. It carries out the reaction tRNA(Ala) + L-alanine + ATP = L-alanyl-tRNA(Ala) + AMP + diphosphate. In terms of biological role, catalyzes the attachment of alanine to tRNA(Ala) in a two-step reaction: alanine is first activated by ATP to form Ala-AMP and then transferred to the acceptor end of tRNA(Ala). Also edits incorrectly charged Ser-tRNA(Ala) and Gly-tRNA(Ala) via its editing domain. This is Alanine--tRNA ligase from Anaeromyxobacter sp. (strain Fw109-5).